Here is a 92-residue protein sequence, read N- to C-terminus: Putative pterin-4-alpha-carbinolamine dehydratase (92 aa).

It belongs to the pterin-4-alpha-carbinolamine dehydratase family.

It carries out the reaction (4aS,6R)-4a-hydroxy-L-erythro-5,6,7,8-tetrahydrobiopterin = (6R)-L-erythro-6,7-dihydrobiopterin + H2O. This chain is Putative pterin-4-alpha-carbinolamine dehydratase, found in Natronomonas pharaonis (strain ATCC 35678 / DSM 2160 / CIP 103997 / JCM 8858 / NBRC 14720 / NCIMB 2260 / Gabara) (Halobacterium pharaonis).